A 49-amino-acid chain; its full sequence is Disintegrin eristostatin (49 aa).

Positions 1 to 49 constitute a Disintegrin domain; the sequence is QEEPCATGPCCRRCKFKRAGKVCRVARGDWNDDYCTGKSCDCPKNPWNG. 4 disulfides stabilise this stretch: Cys-5/Cys-14, Cys-10/Cys-35, Cys-11/Cys-40, and Cys-23/Cys-42. A Cell attachment site motif is present at residues 27 to 29; the sequence is RGD.

This sequence belongs to the venom metalloproteinase (M12B) family. P-II subfamily. P-IIa sub-subfamily. Monomer. As to expression, expressed by the venom gland.

It localises to the secreted. Functionally, is a potent inhibitor of ADP-induced platelet aggregation. Acts by binding to alpha-IIb/beta-3 (ITGA2B/ITGB3) receptor on the platelet surface. Binds with the same high affinity to resting and activated platelets. Also binds the alpha-4/beta-1 (ITGA4/ITGB1) integrin. Is a potent inhibitor of human and murine melanoma metastases in mouse model systems, also due to the inhibition of binding between the alpha-4/beta-1 integrin and the vascular cell adhesion protein VCAM1. Reacts neither with the integrin alpha-V/beta-3 (ITGAV/ITGB3) vitronectin receptor nor with the integrin alpha-5/beta-1 (ITGA5/ITGB1) fibronectin receptor. Has no effect on cell proliferation or angiogenesis. Specifically inhibits cell migration on fibronectin, but not that on collagen IV or laminin. May involve fibronectin-binding integrins that mediate cell migration. The polypeptide is Disintegrin eristostatin (Eristicophis macmahoni (Leaf-nosed viper)).